The primary structure comprises 346 residues: tRNA N6-adenosine threonylcarbamoyltransferase (346 aa).

Residues histidine 111 and histidine 115 each coordinate Fe cation. Substrate contacts are provided by residues 134–138, aspartate 167, glycine 180, and asparagine 279; that span reads LVSGG. Aspartate 307 serves as a coordination point for Fe cation.

Belongs to the KAE1 / TsaD family. Fe(2+) serves as cofactor.

It is found in the cytoplasm. The catalysed reaction is L-threonylcarbamoyladenylate + adenosine(37) in tRNA = N(6)-L-threonylcarbamoyladenosine(37) in tRNA + AMP + H(+). Required for the formation of a threonylcarbamoyl group on adenosine at position 37 (t(6)A37) in tRNAs that read codons beginning with adenine. Is involved in the transfer of the threonylcarbamoyl moiety of threonylcarbamoyl-AMP (TC-AMP) to the N6 group of A37, together with TsaE and TsaB. TsaD likely plays a direct catalytic role in this reaction. In Burkholderia ambifaria (strain MC40-6), this protein is tRNA N6-adenosine threonylcarbamoyltransferase.